Consider the following 140-residue polypeptide: Zinc finger SWIM domain-containing protein 7 (140 aa).

The segment at 66–114 (YQVLGSSSKTYTCLASCHYCSCPAFAFSVLRKSDSILCKHLLAVYLSQV) adopts an SWIM-type zinc-finger fold.

It belongs to the SWS1 family. As to quaternary structure, interacts with RAD51D and XRCC3; involved in homologous recombination repair. Interacts with SWSAP1; they form a functional complex involved in homologous recombination repair and stabilize each other. In terms of tissue distribution, expressed in ovary and testis.

It localises to the nucleus. Its function is as follows. Involved in early stages of the homologous recombination repair (HRR) pathway of double-stranded DNA breaks arising during DNA replication or induced by DNA-damaging agents. Required for meiotic progression, hence for fertility. The polypeptide is Zinc finger SWIM domain-containing protein 7 (ZSWIM7) (Homo sapiens (Human)).